A 495-amino-acid polypeptide reads, in one-letter code: Glutamyl-tRNA(Gln) amidotransferase subunit A (495 aa).

Active-site charge relay system residues include Lys78 and Ser158. Catalysis depends on Ser182, which acts as the Acyl-ester intermediate.

This sequence belongs to the amidase family. GatA subfamily. Heterotrimer of A, B and C subunits.

It catalyses the reaction L-glutamyl-tRNA(Gln) + L-glutamine + ATP + H2O = L-glutaminyl-tRNA(Gln) + L-glutamate + ADP + phosphate + H(+). Its function is as follows. Allows the formation of correctly charged Gln-tRNA(Gln) through the transamidation of misacylated Glu-tRNA(Gln) in organisms which lack glutaminyl-tRNA synthetase. The reaction takes place in the presence of glutamine and ATP through an activated gamma-phospho-Glu-tRNA(Gln). This chain is Glutamyl-tRNA(Gln) amidotransferase subunit A, found in Ruegeria sp. (strain TM1040) (Silicibacter sp.).